The chain runs to 81 residues: uncharacterized protein (81 aa).

It belongs to the ycf70 family.

The protein localises to the plastid. The protein resides in the chloroplast. This is an uncharacterized protein from Saccharum officinarum (Sugarcane).